A 150-amino-acid chain; its full sequence is UPF0756 membrane protein ECA1265 (150 aa).

The next 4 membrane-spanning stretches (helical) occupy residues 1–21 (MAYIDPTLLILLVLAGLGIIS), 51–71 (YGLSIGIVVLTIGVMAPIASG), 82–102 (FLHWKSLLAILIGVAVSWLGG), and 127–147 (ALFRGVPVGPLIAAGLLSLLI).

It belongs to the UPF0756 family.

The protein localises to the cell membrane. The chain is UPF0756 membrane protein ECA1265 from Pectobacterium atrosepticum (strain SCRI 1043 / ATCC BAA-672) (Erwinia carotovora subsp. atroseptica).